We begin with the raw amino-acid sequence, 140 residues long: Pro-vaccinia growth factor (140 aa).

The first 18 residues, 1-18 (MSMKYLMLLFAAMIIRSF), serve as a signal peptide directing secretion. At 19 to 100 (ADSGNAIETT…SENPNTTTSY (82 aa)) the chain is on the extracellular side. Asn-34 carries N-linked (GlcNAc...) asparagine; by host glycosylation. Residues 41–81 (AIRLCGPEGDGYCLHGDCIHARDIDGMYCRCSHGYTGIRCQ) form the EGF-like domain. Disulfide bonds link Cys-45–Cys-58, Cys-53–Cys-69, and Cys-71–Cys-80. Asn-95 carries N-linked (GlcNAc...) asparagine; by host glycosylation. A helical transmembrane segment spans residues 101 to 121 (IPSPGIVLVLVGIIIITCCSL). Residues 122–140 (SVYRFTRRTKLPIQDMVVP) lie on the Cytoplasmic side of the membrane.

This sequence belongs to the orthopoxvirus OPG019 family. As to quaternary structure, vaccinia growth factor interacts with host EGFR and promotes EGFR dimerization.

Its subcellular location is the host membrane. The protein localises to the secreted. Functionally, stimulates cellular proliferation (hyperplasia)and mobility around infected cells to promote rapid and efficient spread of infection. This effect is beneficial for virus replication in vivo, because poxviruses replicate possibly better in proliferating cells than in quiescent cells. Acts by binding host EGFR, inducing its dimerization, autophosphorylation and leading to activation of several cellular pathways regulating cell proliferation or cell survival. The activation by host EGFR of mitogen activated protein kinases (MAPK) and extracellular-signal regulated kinases (ERK) are essential for the positive effect of vaccinia growth factor on poxvirus virulence in vivo. This chain is Pro-vaccinia growth factor (OPG019), found in Vaccinia virus (strain L-IVP) (VACV).